The chain runs to 431 residues: MLQHTKSAELFEKAKQFIPGGVNSPVRAFKSVGGTPIYMAKGRGAYLTDVDGNSYLDYVGSWGPFILGSMHPRITAALEYTLKNIGTSFGTPIEMEIEIAELLCKIVPSLEMVRMVNSGTEATMSAVRLARGYTGRDKIIKFEGCYHGHGDSFLIKAGSGALTLGAPDSPGVTKGTALDTLNATYNDIESVKLLVEENKNNIAAIIIEPVAGNTGVIPAKPGFLADLRNLCDQNGIVLIFDEVMCGFRVALGGAQSLYGVTPDLTTMGKIIGGGLPVGAFGGKRKIMERVAPLGDVYQAGTLSGNPLALTAGLETLKILMDENPYPELERKAAILEAGFRDNMQKLGLNFVQNRVGSMACLFFTETPVESYASAITADIRKYGKYFHSMLEQGIYLAPSQFEAMFTSSMHTDEDLDKTIKANFNALQIACS.

Position 269 is an N6-(pyridoxal phosphate)lysine (Lys269).

Belongs to the class-III pyridoxal-phosphate-dependent aminotransferase family. HemL subfamily. In terms of assembly, homodimer. Requires pyridoxal 5'-phosphate as cofactor.

Its subcellular location is the cytoplasm. It carries out the reaction (S)-4-amino-5-oxopentanoate = 5-aminolevulinate. It functions in the pathway porphyrin-containing compound metabolism; protoporphyrin-IX biosynthesis; 5-aminolevulinate from L-glutamyl-tRNA(Glu): step 2/2. It participates in porphyrin-containing compound metabolism; chlorophyll biosynthesis. In Chlorobium phaeobacteroides (strain DSM 266 / SMG 266 / 2430), this protein is Glutamate-1-semialdehyde 2,1-aminomutase.